The primary structure comprises 415 residues: Transcription factor gsfR2 (415 aa).

Residues 9–36 (CITCVQSKRKCDQGLPKCQRCLAKNIHC) constitute a DNA-binding region (zn(2)-C6 fungal-type). The segment at 65–91 (AEEPSRGCQLQRSPARPTSPTHSPHAN) is disordered. The segment covering 72–88 (CQLQRSPARPTSPTHSP) has biased composition (polar residues).

It localises to the nucleus. In terms of biological role, transcription factor that regulates expression of the gene cluster that mediates the biosynthesis of Griseofulvin, an important antifungal drug that has been in use for a long time for treating dermatophyte infections. The sequence is that of Transcription factor gsfR2 from Penicillium aethiopicum.